Consider the following 197-residue polypeptide: Large ribosomal subunit protein bL17 (197 aa).

Positions 136 to 197 are disordered; that stretch reads RAAKKADAPQ…DAEKSSDTEK (62 aa). Positions 148 to 187 are enriched in acidic residues; that stretch reads VADEATDADESVEDEAPAQDDSADEVEAAADETPADDAEA. Residues 188 to 197 show a composition bias toward basic and acidic residues; sequence DAEKSSDTEK.

It belongs to the bacterial ribosomal protein bL17 family. In terms of assembly, part of the 50S ribosomal subunit. Contacts protein L32.

The sequence is that of Large ribosomal subunit protein bL17 from Beutenbergia cavernae (strain ATCC BAA-8 / DSM 12333 / CCUG 43141 / JCM 11478 / NBRC 16432 / NCIMB 13614 / HKI 0122).